The sequence spans 81 residues: Photosystem I iron-sulfur center (81 aa).

4Fe-4S ferredoxin-type domains are found at residues serine 2–tryptophan 31 and isoleucine 39–tyrosine 68. Positions 11, 14, 17, 21, 48, 51, 54, and 58 each coordinate [4Fe-4S] cluster.

In terms of assembly, the eukaryotic PSI reaction center is composed of at least 11 subunits. The cofactor is [4Fe-4S] cluster.

It is found in the plastid. The protein resides in the chloroplast thylakoid membrane. It catalyses the reaction reduced [plastocyanin] + hnu + oxidized [2Fe-2S]-[ferredoxin] = oxidized [plastocyanin] + reduced [2Fe-2S]-[ferredoxin]. In terms of biological role, apoprotein for the two 4Fe-4S centers FA and FB of photosystem I (PSI); essential for photochemical activity. FB is the terminal electron acceptor of PSI, donating electrons to ferredoxin. The C-terminus interacts with PsaA/B/D and helps assemble the protein into the PSI complex. Required for binding of PsaD and PsaE to PSI. PSI is a plastocyanin-ferredoxin oxidoreductase, converting photonic excitation into a charge separation, which transfers an electron from the donor P700 chlorophyll pair to the spectroscopically characterized acceptors A0, A1, FX, FA and FB in turn. The protein is Photosystem I iron-sulfur center of Sorghum bicolor (Sorghum).